The chain runs to 83 residues: Small ribosomal subunit protein uS19m (83 aa).

This sequence belongs to the universal ribosomal protein uS19 family.

Its subcellular location is the mitochondrion. In Tetraselmis subcordiformis (Marine green alga), this protein is Small ribosomal subunit protein uS19m (RPS19).